Reading from the N-terminus, the 1064-residue chain is DNA-directed RNA polymerase subunit beta (1064 aa).

The protein belongs to the RNA polymerase beta chain family. In plastids the minimal PEP RNA polymerase catalytic core is composed of four subunits: alpha, beta, beta', and beta''. When a (nuclear-encoded) sigma factor is associated with the core the holoenzyme is formed, which can initiate transcription.

The protein resides in the plastid. The protein localises to the chloroplast. It catalyses the reaction RNA(n) + a ribonucleoside 5'-triphosphate = RNA(n+1) + diphosphate. Its function is as follows. DNA-dependent RNA polymerase catalyzes the transcription of DNA into RNA using the four ribonucleoside triphosphates as substrates. The chain is DNA-directed RNA polymerase subunit beta from Jasminum nudiflorum (Winter jasmine).